The primary structure comprises 157 residues: Small ribosomal subunit protein uS7 (157 aa).

It belongs to the universal ribosomal protein uS7 family. In terms of assembly, part of the 30S ribosomal subunit. Contacts proteins S9 and S11.

In terms of biological role, one of the primary rRNA binding proteins, it binds directly to 16S rRNA where it nucleates assembly of the head domain of the 30S subunit. Is located at the subunit interface close to the decoding center, probably blocks exit of the E-site tRNA. The protein is Small ribosomal subunit protein uS7 of Psychrobacter sp. (strain PRwf-1).